The sequence spans 3925 residues: Polyketide synthase ThaH (3925 aa).

A disordered region spans residues 1–56 (MPRWRPTWLKRLSCPKQPRHPTHPKHPTHPKHPKHPKHPRHPKHPRISRRCSSASA). Residues 17 to 49 (QPRHPTHPKHPTHPKHPKHPKHPRHPKHPRISR) show a composition bias toward basic residues. Positions 1073 to 1148 (GLVGGLEGEV…DIAGYIASAE (76 aa)) constitute a Carrier 1 domain. Residue S1108 is modified to O-(pantetheine 4'-phosphoryl)serine. Residues 1166–1182 (AAVATPPGRPAGEAAGA) show a composition bias toward low complexity. A disordered region spans residues 1166-1233 (AAVATPPGRP…GEPARAASHG (68 aa)). The span at 1183 to 1196 (QRDRAPRAADERAD) shows a compositional bias: basic and acidic residues. Low complexity predominate over residues 1202-1216 (PSDAHASKAAAIDSR). Positions 1237-1667 (ADGLAIIGIA…GTNAHALVEA (431 aa)) constitute a Ketosynthase family 3 (KS3) 1 domain. Catalysis depends on for beta-ketoacyl synthase 1 activity residues C1413, H1549, and H1589. Positions 1679-1698 (GATGAPDVPDAPDAPDAPDA) are disordered. Residues 1844–1969 (HPLLHRNVST…GHVQRIAEPA (126 aa)) are N-terminal hotdog fold. One can recognise a PKS/mFAS DH domain in the interval 1844–2143 (HPLLHRNVST…ARRFVREPAR (300 aa)). H1873 (proton acceptor; for dehydratase activity) is an active-site residue. The interval 1983-2143 (AAPRLSAARC…ARRFVREPAR (161 aa)) is C-terminal hotdog fold. The Proton donor; for dehydratase activity role is filled by D2043. 2 stretches are compositionally biased toward low complexity: residues 2594-2607 (DDPA…AASS) and 2632-2646 (PAAA…ASDA). Disordered regions lie at residues 2594–2613 (DDPA…LPEM) and 2619–2657 (APAD…AAPA). The 74-residue stretch at 2664-2737 (EHALALLKRL…ELACYFVAHH (74 aa)) folds into the Carrier 2 domain. At S2698 the chain carries O-(pantetheine 4'-phosphoryl)serine. Residues 2753-2768 (LAPAPAQPLAPRAPSA) are compositionally biased toward low complexity. The tract at residues 2753 to 2841 (LAPAPAQPLA…AHAPAQASAP (89 aa)) is disordered. Residues 2770 to 2779 (PARDAARSLE) are compositionally biased toward basic and acidic residues. Composition is skewed to low complexity over residues 2789–2813 (GQEP…QASA) and 2823–2841 (ETRT…ASAP). One can recognise a Ketosynthase family 3 (KS3) 2 domain in the interval 2847-3286 (AFDIAIVGLA…GSNAHLIVEE (440 aa)). Catalysis depends on for beta-ketoacyl synthase 2 activity residues C3022, H3157, and H3197. Composition is skewed to low complexity over residues 3512–3524 (ASTA…PSPA) and 3578–3592 (AAAA…SSPS). 2 disordered regions span residues 3512–3531 (ASTA…STGE) and 3578–3619 (AAAA…AAPD). Pro residues predominate over residues 3593 to 3603 (PSSPSPLPSSP). Residues 3604–3619 (PRMSSRQHASPAAAPD) show a composition bias toward low complexity. A Carrier 3 domain is found at 3622-3699 (AALLDIEAFL…AMARHVSSNA (78 aa)). Residue S3659 is modified to O-(pantetheine 4'-phosphoryl)serine. The interval 3734–3754 (PAPFASAAPPEPPASPARADG) is disordered. One can recognise a Carrier 4 domain in the interval 3762 to 3839 (TSLDAIRAHL…ALARFVGTQL (78 aa)). At S3799 the chain carries O-(pantetheine 4'-phosphoryl)serine.

This sequence belongs to the ATP-dependent AMP-binding enzyme family. It depends on pantetheine 4'-phosphate as a cofactor.

It localises to the cytoplasm. It functions in the pathway antibiotic biosynthesis. In terms of biological role, involved in production of the polyketide antibiotic thailandamide. The polypeptide is Polyketide synthase ThaH (Burkholderia thailandensis (strain ATCC 700388 / DSM 13276 / CCUG 48851 / CIP 106301 / E264)).